Reading from the N-terminus, the 118-residue chain is Small ribosomal subunit protein uS13 (118 aa).

Positions 92–118 (RKGLPVRGQRTKTNARTRKGPRKPIRK) are disordered.

The protein belongs to the universal ribosomal protein uS13 family. In terms of assembly, part of the 30S ribosomal subunit. Forms a loose heterodimer with protein S19. Forms two bridges to the 50S subunit in the 70S ribosome.

Located at the top of the head of the 30S subunit, it contacts several helices of the 16S rRNA. In the 70S ribosome it contacts the 23S rRNA (bridge B1a) and protein L5 of the 50S subunit (bridge B1b), connecting the 2 subunits; these bridges are implicated in subunit movement. Contacts the tRNAs in the A and P-sites. The chain is Small ribosomal subunit protein uS13 from Pseudomonas putida (strain ATCC 700007 / DSM 6899 / JCM 31910 / BCRC 17059 / LMG 24140 / F1).